The following is a 601-amino-acid chain: Cdc42-interacting protein 4 (601 aa).

A required for podosome formation and interaction with AKAP9 and microtubules region spans residues 1–117 (MDWGTELWDQ…EMKQERKMHF (117 aa)). Positions 1–117 (MDWGTELWDQ…EMKQERKMHF (117 aa)) are required for translocation to the plasma membrane in response to insulin. An F-BAR domain is found at 1–264 (MDWGTELWDQ…AANAVDPKND (264 aa)). A coiled-coil region spans residues 67–259 (FSQQQSFVQI…EGMKVAANAV (193 aa)). 3 disordered regions span residues 280–358 (GDVE…GRDP), 390–420 (DFSHLPPEQQRKRLQQQLEERSRELQKEVDQ), and 479–543 (RGDS…SPIG). Polar residues predominate over residues 289–302 (QPMNRAPSDSSLGT). Residues 293–537 (RAPSDSSLGT…TEFDEDFEEE (245 aa)) form an interaction with CDC42 region. The segment at 293–601 (RAPSDSSLGT…PTSYLRVTLN (309 aa)) is interaction with PDE6G. A phosphoserine mark is found at Ser-296, Ser-298, and Ser-299. Basic residues predominate over residues 314 to 329 (GRSRTKRWPFGKKNKP). Ser-335 carries the phosphoserine modification. Positions 336–346 (PLGGPVPSALP) are enriched in low complexity. The residue at position 351 (Ser-351) is a Phosphoserine. Residues 388–481 (TEDFSHLPPE…ESRVLSNRGD (94 aa)) adopt a coiled-coil conformation. Positions 393 to 470 (HLPPEQQRKR…VQKYEAWLAE (78 aa)) constitute an REM-1 domain. Positions 407–420 (LEERSRELQKEVDQ) are enriched in basic and acidic residues. A required for interaction with FASLG and localization to lysosomes region spans residues 471 to 601 (AESRVLSNRG…PTSYLRVTLN (131 aa)). The residue at position 482 (Ser-482) is a Phosphoserine. The tract at residues 487-541 (ARPPDPPASAPPDSSSNSASQDTKESSEEPPSEESQDTPIYTEFDEDFEEEPTSP) is interaction with DNM2 and WASL. The segment covering 497-506 (PPDSSSNSAS) has biased composition (low complexity). Positions 529–538 (EFDEDFEEEP) are enriched in acidic residues. The tract at residues 529–601 (EFDEDFEEEP…PTSYLRVTLN (73 aa)) is interaction with DNM1 and WASL. The segment at 538-601 (PTSPIGHCVA…PTSYLRVTLN (64 aa)) is required for podosome formation. Positions 540–601 (SPIGHCVAIY…PTSYLRVTLN (62 aa)) constitute an SH3 domain. The interval 544 to 601 (HCVAIYHFEGSSEGTISMAEGEDLSLMEEDKGDGWTRVRRKEGGEGYVPTSYLRVTLN) is interaction with WAS. Residues 546–601 (VAIYHFEGSSEGTISMAEGEDLSLMEEDKGDGWTRVRRKEGGEGYVPTSYLRVTLN) form an interaction with ARHGAP17, DAAM1, DIAPH1 and DIAPH2 region.

Belongs to the FNBP1 family. As to quaternary structure, interacts specifically with GTP-bound RHOQ. Interacts with DNM2 and PDE6G. Homodimerizes, the dimers can polymerize end-to-end to form filamentous structures. Interacts specifically with GTP-bound CDC42. Interacts with AKAP9, ARHGAP17, DAAM1, DIAPH1, DIAPH2, DNM1, FASLG/FASL, GAPVD1, LYN, microtubules, SRC, WAS/WASP and WASL/N-WASP. Interacts with the ligand binding domain of the thyroid receptor (TR) in the presence of thyroid hormone. May interact with CTNNB1 and HD/HTT. Tyrosine phosphorylated. Also phosphorylated by PKA. In terms of tissue distribution, expressed in brain, colon, heart, kidney, liver, lung, megakaryocyte, ovary, pancreas, peripheral blood lymphocytes, placenta, prostate, skeletal muscle, small intestine, spleen, testis, thymus and trachea.

It is found in the cytoplasm. Its subcellular location is the cytoskeleton. The protein resides in the cell cortex. It localises to the lysosome. The protein localises to the golgi apparatus. It is found in the cell membrane. Its subcellular location is the cell projection. The protein resides in the phagocytic cup. It localises to the perinuclear region. Its function is as follows. Required for translocation of GLUT4 to the plasma membrane in response to insulin signaling. Required to coordinate membrane tubulation with reorganization of the actin cytoskeleton during endocytosis. Binds to lipids such as phosphatidylinositol 4,5-bisphosphate and phosphatidylserine and promotes membrane invagination and the formation of tubules. Also promotes CDC42-induced actin polymerization by recruiting WASL/N-WASP which in turn activates the Arp2/3 complex. Actin polymerization may promote the fission of membrane tubules to form endocytic vesicles. Required for the formation of podosomes, actin-rich adhesion structures specific to monocyte-derived cells. May be required for the lysosomal retention of FASLG/FASL. The sequence is that of Cdc42-interacting protein 4 (TRIP10) from Homo sapiens (Human).